Here is a 355-residue protein sequence, read N- to C-terminus: Protein RecA (355 aa).

67–74 (GPESSGKT) is a binding site for ATP.

Belongs to the RecA family.

The protein localises to the cytoplasm. Can catalyze the hydrolysis of ATP in the presence of single-stranded DNA, the ATP-dependent uptake of single-stranded DNA by duplex DNA, and the ATP-dependent hybridization of homologous single-stranded DNAs. It interacts with LexA causing its activation and leading to its autocatalytic cleavage. In Shewanella baltica (strain OS223), this protein is Protein RecA.